A 367-amino-acid polypeptide reads, in one-letter code: Probable butyrate kinase (367 aa).

This sequence belongs to the acetokinase family.

Its subcellular location is the cytoplasm. The enzyme catalyses butanoate + ATP = butanoyl phosphate + ADP. This chain is Probable butyrate kinase, found in Bacillus cereus (strain ATCC 14579 / DSM 31 / CCUG 7414 / JCM 2152 / NBRC 15305 / NCIMB 9373 / NCTC 2599 / NRRL B-3711).